The sequence spans 194 residues: Peptidyl-tRNA hydrolase (194 aa).

Residue Tyr17 coordinates tRNA. Catalysis depends on His22, which acts as the Proton acceptor. Positions 68, 70, and 116 each coordinate tRNA.

This sequence belongs to the PTH family. In terms of assembly, monomer.

It is found in the cytoplasm. It carries out the reaction an N-acyl-L-alpha-aminoacyl-tRNA + H2O = an N-acyl-L-amino acid + a tRNA + H(+). Its function is as follows. Hydrolyzes ribosome-free peptidyl-tRNAs (with 1 or more amino acids incorporated), which drop off the ribosome during protein synthesis, or as a result of ribosome stalling. Functionally, catalyzes the release of premature peptidyl moieties from peptidyl-tRNA molecules trapped in stalled 50S ribosomal subunits, and thus maintains levels of free tRNAs and 50S ribosomes. The chain is Peptidyl-tRNA hydrolase from Marinomonas sp. (strain MWYL1).